The chain runs to 181 residues: Ribosome-recycling factor (181 aa).

The segment at 131-154 (RRDAMDSVKKEKEMPEDDVRKAEN) is disordered.

This sequence belongs to the RRF family.

The protein localises to the cytoplasm. Functionally, responsible for the release of ribosomes from messenger RNA at the termination of protein biosynthesis. May increase the efficiency of translation by recycling ribosomes from one round of translation to another. The sequence is that of Ribosome-recycling factor from Leuconostoc citreum (strain KM20).